A 258-amino-acid chain; its full sequence is Phosphate import ATP-binding protein PstB (258 aa).

Residues 5–247 (LDLKGVNIYY…EKIFSNPTEK (243 aa)) enclose the ABC transporter domain. 37–44 (GASGCGKT) is a binding site for ATP.

This sequence belongs to the ABC transporter superfamily. Phosphate importer (TC 3.A.1.7) family. In terms of assembly, the complex is composed of two ATP-binding proteins (PstB), two transmembrane proteins (PstC and PstA) and a solute-binding protein (PstS).

It localises to the cell membrane. It catalyses the reaction phosphate(out) + ATP + H2O = ADP + 2 phosphate(in) + H(+). In terms of biological role, part of the ABC transporter complex PstSACB involved in phosphate import. Responsible for energy coupling to the transport system. This Mycobacterium leprae (strain TN) protein is Phosphate import ATP-binding protein PstB.